Consider the following 305-residue polypeptide: Plant-type L-asparaginase (305 aa).

The active-site Nucleophile is the T175. Residues 202-205 and 224-227 contribute to the substrate site; these read RVGD and TGLG.

This sequence belongs to the Ntn-hydrolase family. Heterotetramer of two alpha and two beta chains arranged as a dimer of alpha/beta heterodimers. Post-translationally, autocleaved. Generates the alpha and beta subunits. The N-terminal residue of the beta subunit is thought to be responsible for the nucleophile hydrolase activity.

The enzyme catalyses L-asparagine + H2O = L-aspartate + NH4(+). Functionally, catalyzes the hydrolysis of L-asparagine into L-aspartate and ammonia. The protein is Plant-type L-asparaginase of Pyrococcus horikoshii (strain ATCC 700860 / DSM 12428 / JCM 9974 / NBRC 100139 / OT-3).